The chain runs to 620 residues: Chaperone protein HscA homolog (620 aa).

The protein belongs to the heat shock protein 70 family.

Chaperone involved in the maturation of iron-sulfur cluster-containing proteins. Has a low intrinsic ATPase activity which is markedly stimulated by HscB. The polypeptide is Chaperone protein HscA homolog (Shewanella sp. (strain ANA-3)).